The sequence spans 298 residues: Ribosomal RNA small subunit methyltransferase H (298 aa).

S-adenosyl-L-methionine-binding positions include 46–48, Asp65, Phe92, Asp108, and His115; that span reads GGH.

This sequence belongs to the methyltransferase superfamily. RsmH family.

The protein resides in the cytoplasm. It carries out the reaction cytidine(1402) in 16S rRNA + S-adenosyl-L-methionine = N(4)-methylcytidine(1402) in 16S rRNA + S-adenosyl-L-homocysteine + H(+). Functionally, specifically methylates the N4 position of cytidine in position 1402 (C1402) of 16S rRNA. In Nostoc punctiforme (strain ATCC 29133 / PCC 73102), this protein is Ribosomal RNA small subunit methyltransferase H.